The chain runs to 438 residues: Putative F-box/FBD/LRR-repeat protein At5g44950 (438 aa).

Residues 3–49 (RDRISELPDGLLNHILMYLHIEESIRTSVLSSRWRKLWLKVPGLDVN) form the F-box domain. LRR repeat units lie at residues 246 to 275 (LSSL…DLTK) and 286 to 310 (ISSV…KIGQ). Residues 355–407 (PEQIDFTNLPRCLISTLEYVEIKQLTMREESGIKLVKYFLENSAVLKKLTLSF) form the FBD domain.

The protein is Putative F-box/FBD/LRR-repeat protein At5g44950 of Arabidopsis thaliana (Mouse-ear cress).